Here is a 147-residue protein sequence, read N- to C-terminus: Large ribosomal subunit protein uL15 (147 aa).

Over residues 1 to 13 (MELHSLKAAEGSR) the composition is skewed to basic and acidic residues. The tract at residues 1–57 (MELHSLKAAEGSRKVRNRVGRGTSSGNGKTSGRGQKGQKSRSGGGVRPGFEGGQTEL) is disordered. Gly residues-rich tracts occupy residues 23–35 (TSSGNGKTSGRGQ) and 42–52 (SGGGVRPGFEG).

It belongs to the universal ribosomal protein uL15 family. In terms of assembly, part of the 50S ribosomal subunit.

In terms of biological role, binds to the 23S rRNA. In Lactococcus lactis subsp. lactis (strain IL1403) (Streptococcus lactis), this protein is Large ribosomal subunit protein uL15.